Reading from the N-terminus, the 249-residue chain is Exosome complex component Rrp41 (249 aa).

This sequence belongs to the RNase PH family. Rrp41 subfamily. As to quaternary structure, component of the archaeal exosome complex. Forms a hexameric ring-like arrangement composed of 3 Rrp41-Rrp42 heterodimers. The hexameric ring associates with a trimer of Rrp4 and/or Csl4 subunits.

It is found in the cytoplasm. Catalytic component of the exosome, which is a complex involved in RNA degradation. Has 3'-&gt;5' exoribonuclease activity. Can also synthesize heteromeric RNA-tails. The chain is Exosome complex component Rrp41 from Pyrococcus horikoshii (strain ATCC 700860 / DSM 12428 / JCM 9974 / NBRC 100139 / OT-3).